The sequence spans 89 residues: MSVTAERKAQIIKEFATAEGDTGSPEVQVAILTERINNLTEHFKDHKKDNHSRRGLLALVSSRRSLLDYLKKKDEARYTKLIGALGIRR.

This sequence belongs to the universal ribosomal protein uS15 family. In terms of assembly, part of the 30S ribosomal subunit. Forms a bridge to the 50S subunit in the 70S ribosome, contacting the 23S rRNA.

Its function is as follows. One of the primary rRNA binding proteins, it binds directly to 16S rRNA where it helps nucleate assembly of the platform of the 30S subunit by binding and bridging several RNA helices of the 16S rRNA. In terms of biological role, forms an intersubunit bridge (bridge B4) with the 23S rRNA of the 50S subunit in the ribosome. The chain is Small ribosomal subunit protein uS15 from Sinorhizobium medicae (strain WSM419) (Ensifer medicae).